Consider the following 589-residue polypeptide: Outer envelope protein 64, chloroplastic (589 aa).

Residue M1 is a topological domain, chloroplast intermembrane. Residues 2–22 (ASQAANLWVLLGLGLAGILML) form a helical membrane-spanning segment. Over 23–141 (TKKLKKTVRE…NPAAPTRIPG (119 aa)) the chain is Cytoplasmic. The helical transmembrane segment at 142-162 (GACSGAAVAVATNAVDFALGI) threads the bilayer. The Chloroplast intermembrane segment spans residues 163–398 (DTVGGVRVPA…EITSEDYQNR (236 aa)). The helical transmembrane segment at 399-419 (ASSLLSIASISGCCQVTVPLG) threads the bilayer. Residues 420–589 (HHEKCPISVS…LSAERLRKFQ (170 aa)) lie on the Cytoplasmic side of the membrane. 3 TPR repeats span residues 474-507 (AEIA…SDNN), 508-541 (ATYY…DKKN), and 542-575 (VKAY…EPNN).

As to quaternary structure, part of the Toc complex and of the intermembrane space complex. In terms of tissue distribution, expressed in roots, cotyledons, leaves and flower buds.

It localises to the plastid. The protein resides in the chloroplast outer membrane. Functionally, chaperone receptor mediating Hsp90-dependent protein targeting to chloroplasts. Bi-functional preprotein receptor acting on both sides of the membrane. Not essential for an efficient import of pre-proteins into plastids. The polypeptide is Outer envelope protein 64, chloroplastic (OEP64) (Arabidopsis thaliana (Mouse-ear cress)).